The primary structure comprises 126 residues: Small ribosomal subunit protein uS13 (126 aa).

Residues 92-126 (RMGLPVRGQRTRTNARTRRGGRRTVAGKKKAPAKK) are disordered. The span at 100-126 (QRTRTNARTRRGGRRTVAGKKKAPAKK) shows a compositional bias: basic residues.

The protein belongs to the universal ribosomal protein uS13 family. In terms of assembly, part of the 30S ribosomal subunit. Forms a loose heterodimer with protein S19. Forms two bridges to the 50S subunit in the 70S ribosome.

Located at the top of the head of the 30S subunit, it contacts several helices of the 16S rRNA. In the 70S ribosome it contacts the 23S rRNA (bridge B1a) and protein L5 of the 50S subunit (bridge B1b), connecting the 2 subunits; these bridges are implicated in subunit movement. Contacts the tRNAs in the A and P-sites. The protein is Small ribosomal subunit protein uS13 of Cyanothece sp. (strain PCC 7425 / ATCC 29141).